Here is a 316-residue protein sequence, read N- to C-terminus: Very long chain fatty acid elongase 6 (316 aa).

Asparagine 11 carries an N-linked (GlcNAc...) asparagine glycan. The next 6 helical transmembrane spans lie at 30–50 (WMLENWTWVFYYCGIYMLVIF), 64–84 (LRGPLIIWNTLLAMFSIMGAA), 117–137 (FWTWLFVLSKLPELGDTIFIV), 142–162 (PLIFLHWYHHITVLIYSWFSY), 167–189 (SSARWFIVMNYCVHSVMYSYYAL), and 202–222 (MIITSLQLAQMIIGCAINVWA). An N-linked (GlcNAc...) asparagine glycan is attached at asparagine 242. The chain crosses the membrane as a helical span at residues 245–265 (IAMYSSYFVLFARFFYKAYLA).

Belongs to the ELO family. ELOVL6 subfamily. In terms of tissue distribution, detected in the CNS (central nervous system) of third larval instar (at protein level). Expressed in cyst progenitor cells (at protein level). In the adult fly, expressed in several tissues including, sperm, follicular epithelium, nurse cells and cyst cells.

Its subcellular location is the mitochondrion outer membrane. The protein localises to the endoplasmic reticulum membrane. It catalyses the reaction a very-long-chain acyl-CoA + malonyl-CoA + H(+) = a very-long-chain 3-oxoacyl-CoA + CO2 + CoA. It carries out the reaction hexadecanoyl-CoA + malonyl-CoA + H(+) = 3-oxooctadecanoyl-CoA + CO2 + CoA. It participates in lipid metabolism; fatty acid biosynthesis. Its function is as follows. Catalyzes the first and rate-limiting reaction of the four reactions that constitute the long-chain fatty acids elongation cycle. This process allows the addition of 2 carbons to the chain of long- and very long-chain fatty acids (VLCFAs) per cycle. Condensing enzyme that elongates fatty acids with 12, 14 and 16 carbons with higher activity toward C16:0 acyl-CoAs. Catalyzes the synthesis of unsaturated C16 long chain fatty acids and, to a lesser extent, C18:0 and those with low desaturation degree. May participate in the production of saturated and monounsaturated VLCFAs of different chain lengths that are involved in multiple biological processes as precursors of membrane lipids and lipid mediators. The chain is Very long chain fatty acid elongase 6 from Drosophila melanogaster (Fruit fly).